Reading from the N-terminus, the 323-residue chain is tRNA dimethylallyltransferase (323 aa).

12-19 contacts ATP; it reads GPTAAGKT. Substrate is bound at residue 14 to 19; it reads TAAGKT. 2 interaction with substrate tRNA regions span residues 37-40 and 161-165; these read DSAL and QRLIR.

It belongs to the IPP transferase family. Monomer. Requires Mg(2+) as cofactor.

The catalysed reaction is adenosine(37) in tRNA + dimethylallyl diphosphate = N(6)-dimethylallyladenosine(37) in tRNA + diphosphate. Catalyzes the transfer of a dimethylallyl group onto the adenine at position 37 in tRNAs that read codons beginning with uridine, leading to the formation of N6-(dimethylallyl)adenosine (i(6)A). The polypeptide is tRNA dimethylallyltransferase (Pseudomonas syringae pv. syringae (strain B728a)).